The chain runs to 316 residues: 4-hydroxy-3-methylbut-2-enyl diphosphate reductase (316 aa).

Residue Cys-12 participates in [4Fe-4S] cluster binding. (2E)-4-hydroxy-3-methylbut-2-enyl diphosphate is bound by residues His-41 and His-74. His-41 and His-74 together coordinate dimethylallyl diphosphate. Isopentenyl diphosphate is bound by residues His-41 and His-74. A [4Fe-4S] cluster-binding site is contributed by Cys-96. A (2E)-4-hydroxy-3-methylbut-2-enyl diphosphate-binding site is contributed by His-124. His-124 is a dimethylallyl diphosphate binding site. Residue His-124 coordinates isopentenyl diphosphate. Glu-126 acts as the Proton donor in catalysis. Thr-169 is a (2E)-4-hydroxy-3-methylbut-2-enyl diphosphate binding site. Cys-199 is a [4Fe-4S] cluster binding site. Positions 227, 228, 229, and 271 each coordinate (2E)-4-hydroxy-3-methylbut-2-enyl diphosphate. The dimethylallyl diphosphate site is built by Ser-227, Ser-228, Asn-229, and Ser-271. Positions 227, 228, 229, and 271 each coordinate isopentenyl diphosphate.

The protein belongs to the IspH family. The cofactor is [4Fe-4S] cluster.

It carries out the reaction isopentenyl diphosphate + 2 oxidized [2Fe-2S]-[ferredoxin] + H2O = (2E)-4-hydroxy-3-methylbut-2-enyl diphosphate + 2 reduced [2Fe-2S]-[ferredoxin] + 2 H(+). It catalyses the reaction dimethylallyl diphosphate + 2 oxidized [2Fe-2S]-[ferredoxin] + H2O = (2E)-4-hydroxy-3-methylbut-2-enyl diphosphate + 2 reduced [2Fe-2S]-[ferredoxin] + 2 H(+). Its pathway is isoprenoid biosynthesis; dimethylallyl diphosphate biosynthesis; dimethylallyl diphosphate from (2E)-4-hydroxy-3-methylbutenyl diphosphate: step 1/1. It participates in isoprenoid biosynthesis; isopentenyl diphosphate biosynthesis via DXP pathway; isopentenyl diphosphate from 1-deoxy-D-xylulose 5-phosphate: step 6/6. Functionally, catalyzes the conversion of 1-hydroxy-2-methyl-2-(E)-butenyl 4-diphosphate (HMBPP) into a mixture of isopentenyl diphosphate (IPP) and dimethylallyl diphosphate (DMAPP). Acts in the terminal step of the DOXP/MEP pathway for isoprenoid precursor biosynthesis. This Xylella fastidiosa (strain M23) protein is 4-hydroxy-3-methylbut-2-enyl diphosphate reductase.